The sequence spans 1052 residues: SE-cephalotoxin (1052 aa).

The signal sequence occupies residues 1 to 21 (MMGTSRCVILLFALLLWAANA). Residues 22–29 (APPEIHTT) constitute a propeptide that is removed on maturation. N-linked (GlcNAc...) asparagine glycosylation is present at Asn-41. A coiled-coil region spans residues 130-194 (TGVNRKLDQI…DMNKRRLMAE (65 aa)). N-linked (GlcNAc...) asparagine glycosylation occurs at Asn-353. The region spanning 460–497 (PGNPCNHGCNGHGECKVVPYTDQFQCFCHGNYEGKMCQ) is the EGF-like domain. 3 disulfides stabilise this stretch: Cys-464/Cys-474, Cys-468/Cys-485, and Cys-487/Cys-496. Asn-576 and Asn-715 each carry an N-linked (GlcNAc...) asparagine glycan. One can recognise a Sushi domain in the interval 709-769 (TSCPPLNVTH…QWSATPKCES (61 aa)). 7 cysteine pairs are disulfide-bonded: Cys-711–Cys-752, Cys-739–Cys-767, Cys-780–Cys-814, Cys-784–Cys-820, Cys-795–Cys-804, Cys-829–Cys-847, and Cys-841–Cys-858. Residues 768–821 (ESSWSRWSKWSACASTCGNATQSRRRRCLGQSESEKCIGPSKQVRKCFVEDCCQ) form the TSP type-1 domain. Residue Asn-786 is glycosylated (N-linked (GlcNAc...) asparagine). The region spanning 819–859 (CCQEKYGKFKCDNNKCISLSRVCDGNDDCRNAEDESKSRCK) is the LDL-receptor class A domain.

Monomer. As to expression, expressed by the salivary gland.

It localises to the secreted. The chain is SE-cephalotoxin from Acanthosepion esculentum (Golden cuttlefish).